A 456-amino-acid polypeptide reads, in one-letter code: Protein translocase subunit SecY (456 aa).

The Cytoplasmic portion of the chain corresponds to Met1–Pro21. Residues Gly22–Pro48 form a helical membrane-spanning segment. The Extracellular segment spans residues Leu49 to Gln59. An intramembrane region (helical) is located at residues Phe60–Leu67. The discontinuously helical transmembrane segment at Phe60–Ile88 threads the bilayer. The stretch at Ala68–Ile79 is an intramembrane region. The helical intramembrane region spans Gly80 to Ile88. Residues Leu89–Ala109 lie on the Cytoplasmic side of the membrane. The chain crosses the membrane as a helical span at residues Phe110–Gly134. Topologically, residues Ser135–Pro141 are extracellular. Residues Gln142–Ser166 form a helical membrane-spanning segment. Over Lys167–Ser172 the chain is Cytoplasmic. Residues Gly173–Phe191 form a helical membrane-spanning segment. Residues Asn192 to Tyr224 lie on the Extracellular side of the membrane. Residues Tyr225–Arg246 traverse the membrane as a helical segment. At Val247–Ser275 the chain is on the cytoplasmic side. Residues Asn276 to Gln297 form a helical membrane-spanning segment. At Lys298–Phe334 the chain is on the extracellular side. The helical transmembrane segment at Arg335 to Trp354 threads the bilayer. Topologically, residues Val355–Ile397 are cytoplasmic. The helical transmembrane segment at Thr398 to Gly416 threads the bilayer. At Ser417–Gly419 the chain is on the extracellular side. Residues Gly420–Leu434 traverse the membrane as a helical segment. Residues Tyr435–Asp456 lie on the Cytoplasmic side of the membrane.

It belongs to the SecY/SEC61-alpha family. Component of the Sec protein translocase complex. Heterotrimer consisting of alpha (SecY), beta (SecG) and gamma (SecE) subunits. The heterotrimers can form oligomers, although 1 heterotrimer is thought to be able to translocate proteins. Interacts with the ribosome. May interact with SecDF, and other proteins may be involved.

The protein resides in the cell membrane. Functionally, the central subunit of the protein translocation channel SecYEG. Consists of two halves formed by TMs 1-5 and 6-10. These two domains form a lateral gate at the front which open onto the bilayer between TMs 2 and 7, and are clamped together by SecE at the back. The channel is closed by both a pore ring composed of hydrophobic SecY resides and a short helix (helix 2A) on the extracellular side of the membrane which forms a plug. The plug probably moves laterally to allow the channel to open. The ring and the pore may move independently. This Methanothermobacter thermautotrophicus (strain ATCC 29096 / DSM 1053 / JCM 10044 / NBRC 100330 / Delta H) (Methanobacterium thermoautotrophicum) protein is Protein translocase subunit SecY.